A 126-amino-acid polypeptide reads, in one-letter code: Probable prefoldin subunit 4 (126 aa).

Belongs to the prefoldin subunit beta family. As to quaternary structure, heterohexamer of two PFD-alpha type and four PFD-beta type subunits.

In terms of biological role, binds specifically to cytosolic chaperonin (c-CPN) and transfers target proteins to it. Binds to nascent polypeptide chain and promotes folding in an environment in which there are many competing pathways for nonnative proteins. The polypeptide is Probable prefoldin subunit 4 (pfd-4) (Caenorhabditis elegans).